Here is a 508-residue protein sequence, read N- to C-terminus: MSGSALSFTIFPGSILGFLQIATVLTVLLLLFKTAQFYLHRRWLLRATQQFPSPPSHWFFGHKIPKDQEFQDILTRVKNFPSACPQWLWGSNVRIQVYDPDYMKLILGRSDPKSHHSYRFLAPWIGYGLLLLNGQTWFQHRRMLTPAFHYDTLKPYVGIMADSVRIMLDKWEQIVGQDSTLEIFQHITLMTLDTIMKCAFSQEGSVQLDRKYKSYIKAVEDLNNLSFFRIRNIFHQNDIIYSLSSNGRKARSAWQLAHEHTDQVIKSRKAQLQDEEELQKVKQKRRLDFLDILLFARIENGSSLSDKDLRAEVDTFMFEGHDTTASGISWIFYALATNPEHQQGCRKEIQSLLGDGASITWDDLDKMPYTTMCIKEALRIYPPVTAVSRMLSTPVTFPDGRSLPKGITVMLSFYGLHHNPTVWPNPEVFDPYRFAPESSRHSHSFLPFSGGARNCIGKQFAMNELKVAVALTLLRFELLPDPTRIPIPIPRLVLKSKNGIYLRLKKLQ.

2 helical membrane passes run isoleucine 10–leucine 30 and phenylalanine 120–histidine 140. Residue glutamate 319 participates in heme binding. Position 438 is a phosphoserine (serine 438). Heme is bound at residue cysteine 455.

This sequence belongs to the cytochrome P450 family. It depends on heme as a cofactor. Expressed at proximal straight tubules and preglomerular arteries of the outer medulla as well in the cortex regions of kidney (at protein level).

It localises to the endoplasmic reticulum membrane. It is found in the microsome membrane. The catalysed reaction is an organic molecule + reduced [NADPH--hemoprotein reductase] + O2 = an alcohol + oxidized [NADPH--hemoprotein reductase] + H2O + H(+). The enzyme catalyses dodecanoate + reduced [NADPH--hemoprotein reductase] + O2 = 12-hydroxydodecanoate + oxidized [NADPH--hemoprotein reductase] + H2O + H(+). It carries out the reaction dodecanoate + reduced [NADPH--hemoprotein reductase] + O2 = (11R)-hydroxydodecanoate + oxidized [NADPH--hemoprotein reductase] + H2O + H(+). It catalyses the reaction (5Z,8Z,11Z,14Z)-eicosatetraenoate + reduced [NADPH--hemoprotein reductase] + O2 = 20-hydroxy-(5Z,8Z,11Z,14Z)-eicosatetraenoate + oxidized [NADPH--hemoprotein reductase] + H2O + H(+). The catalysed reaction is prostaglandin A1 + reduced [NADPH--hemoprotein reductase] + O2 = 20-hydroxy prostaglandin A1 + oxidized [NADPH--hemoprotein reductase] + H2O + H(+). It participates in lipid metabolism; fatty acid metabolism. Activated by cytochrome b5 and phosphatidylserine. A cytochrome P450 monooxygenase involved in the metabolism of fatty acids. Catalyzes predominantly the oxidation of the terminal carbon (omega-oxidation) of saturated and unsaturated fatty acids. May act as a major omega-hydroxylase for dodecanoic (lauric) acid in kidney. At preglomerular arteries, may participate in omega-hydroxylation of (5Z,8Z,11Z,14Z)-eicosatetraenoic acid (arachidonate) to 20-hydroxyeicosatetraenoic acid (20-HETE), a signaling molecule acting both as vasoconstrictive and natriuretic with overall effect on arterial blood pressure. Can also catalyze the oxidation of the penultimate carbon (omega-1 oxidation) of fatty acids with lower efficiency, displaying a preference for the (R)-stereoisomer. Mechanistically, uses molecular oxygen inserting one oxygen atom into a substrate, and reducing the second into a water molecule, with two electrons provided by NADPH via cytochrome P450 reductase (NADPH--hemoprotein reductase). The polypeptide is Cytochrome P450 4A12 (Cyp4a12) (Rattus norvegicus (Rat)).